The primary structure comprises 274 residues: 3-methyl-2-oxobutanoate hydroxymethyltransferase (274 aa).

The Mg(2+) site is built by Asp54 and Asp93. Residues 54 to 55, Asp93, and Lys121 contribute to the 3-methyl-2-oxobutanoate site; that span reads DS. Glu123 lines the Mg(2+) pocket. Glu190 functions as the Proton acceptor in the catalytic mechanism.

The protein belongs to the PanB family. As to quaternary structure, homodecamer; pentamer of dimers. The cofactor is Mg(2+).

It localises to the cytoplasm. It carries out the reaction 3-methyl-2-oxobutanoate + (6R)-5,10-methylene-5,6,7,8-tetrahydrofolate + H2O = 2-dehydropantoate + (6S)-5,6,7,8-tetrahydrofolate. Its pathway is cofactor biosynthesis; (R)-pantothenate biosynthesis; (R)-pantoate from 3-methyl-2-oxobutanoate: step 1/2. In terms of biological role, catalyzes the reversible reaction in which hydroxymethyl group from 5,10-methylenetetrahydrofolate is transferred onto alpha-ketoisovalerate to form ketopantoate. The polypeptide is 3-methyl-2-oxobutanoate hydroxymethyltransferase (Ralstonia nicotianae (strain ATCC BAA-1114 / GMI1000) (Ralstonia solanacearum)).